The following is a 334-amino-acid chain: Holliday junction branch migration complex subunit RuvB (334 aa).

The tract at residues Met1–Tyr182 is large ATPase domain (RuvB-L). ATP-binding positions include Leu21, Arg22, Gly63, Lys66, Thr67, Thr68, Glu129–Phe131, Arg172, Tyr182, and Arg219. Thr67 contacts Mg(2+). The tract at residues Glu183–Gln253 is small ATPAse domain (RuvB-S). The head domain (RuvB-H) stretch occupies residues Asp256–Asp334. Residues Arg311 and Arg316 each coordinate DNA.

The protein belongs to the RuvB family. As to quaternary structure, homohexamer. Forms an RuvA(8)-RuvB(12)-Holliday junction (HJ) complex. HJ DNA is sandwiched between 2 RuvA tetramers; dsDNA enters through RuvA and exits via RuvB. An RuvB hexamer assembles on each DNA strand where it exits the tetramer. Each RuvB hexamer is contacted by two RuvA subunits (via domain III) on 2 adjacent RuvB subunits; this complex drives branch migration. In the full resolvosome a probable DNA-RuvA(4)-RuvB(12)-RuvC(2) complex forms which resolves the HJ.

It localises to the cytoplasm. It catalyses the reaction ATP + H2O = ADP + phosphate + H(+). In terms of biological role, the RuvA-RuvB-RuvC complex processes Holliday junction (HJ) DNA during genetic recombination and DNA repair, while the RuvA-RuvB complex plays an important role in the rescue of blocked DNA replication forks via replication fork reversal (RFR). RuvA specifically binds to HJ cruciform DNA, conferring on it an open structure. The RuvB hexamer acts as an ATP-dependent pump, pulling dsDNA into and through the RuvAB complex. RuvB forms 2 homohexamers on either side of HJ DNA bound by 1 or 2 RuvA tetramers; 4 subunits per hexamer contact DNA at a time. Coordinated motions by a converter formed by DNA-disengaged RuvB subunits stimulates ATP hydrolysis and nucleotide exchange. Immobilization of the converter enables RuvB to convert the ATP-contained energy into a lever motion, pulling 2 nucleotides of DNA out of the RuvA tetramer per ATP hydrolyzed, thus driving DNA branch migration. The RuvB motors rotate together with the DNA substrate, which together with the progressing nucleotide cycle form the mechanistic basis for DNA recombination by continuous HJ branch migration. Branch migration allows RuvC to scan DNA until it finds its consensus sequence, where it cleaves and resolves cruciform DNA. This is Holliday junction branch migration complex subunit RuvB from Oceanobacillus iheyensis (strain DSM 14371 / CIP 107618 / JCM 11309 / KCTC 3954 / HTE831).